The following is a 261-amino-acid chain: DNA repair protein RecO (261 aa).

It belongs to the RecO family.

Its function is as follows. Involved in DNA repair and RecF pathway recombination. The polypeptide is DNA repair protein RecO (Chlorobium limicola (strain DSM 245 / NBRC 103803 / 6330)).